Consider the following 475-residue polypeptide: Ribulose bisphosphate carboxylase large chain (475 aa).

Positions 1-2 are excised as a propeptide; that stretch reads MS. At proline 3 the chain carries N-acetylproline. Position 14 is an N6,N6,N6-trimethyllysine (lysine 14). Substrate-binding residues include asparagine 123 and threonine 173. Lysine 175 functions as the Proton acceptor in the catalytic mechanism. Lysine 177 contributes to the substrate binding site. Mg(2+) contacts are provided by lysine 201, aspartate 203, and glutamate 204. An N6-carboxylysine modification is found at lysine 201. Histidine 294 serves as the catalytic Proton acceptor. The substrate site is built by arginine 295, histidine 327, and serine 379.

Belongs to the RuBisCO large chain family. Type I subfamily. Heterohexadecamer of 8 large chains and 8 small chains; disulfide-linked. The disulfide link is formed within the large subunit homodimers. Requires Mg(2+) as cofactor. The disulfide bond which can form in the large chain dimeric partners within the hexadecamer appears to be associated with oxidative stress and protein turnover.

It localises to the plastid. The protein resides in the chloroplast. It carries out the reaction 2 (2R)-3-phosphoglycerate + 2 H(+) = D-ribulose 1,5-bisphosphate + CO2 + H2O. It catalyses the reaction D-ribulose 1,5-bisphosphate + O2 = 2-phosphoglycolate + (2R)-3-phosphoglycerate + 2 H(+). Functionally, ruBisCO catalyzes two reactions: the carboxylation of D-ribulose 1,5-bisphosphate, the primary event in carbon dioxide fixation, as well as the oxidative fragmentation of the pentose substrate in the photorespiration process. Both reactions occur simultaneously and in competition at the same active site. This Afrocarpus gracilior (African fern pine) protein is Ribulose bisphosphate carboxylase large chain.